Consider the following 657-residue polypeptide: 1-deoxy-D-xylulose-5-phosphate synthase (657 aa).

Thiamine diphosphate-binding positions include His-73 and 113-115 (SHA). Mg(2+) is bound at residue Asp-145. Thiamine diphosphate is bound by residues 146 to 147 (GA), Asn-175, Tyr-293, and Glu-375. Asn-175 provides a ligand contact to Mg(2+).

This sequence belongs to the transketolase family. DXPS subfamily. As to quaternary structure, homodimer. Mg(2+) is required as a cofactor. It depends on thiamine diphosphate as a cofactor.

It carries out the reaction D-glyceraldehyde 3-phosphate + pyruvate + H(+) = 1-deoxy-D-xylulose 5-phosphate + CO2. It functions in the pathway metabolic intermediate biosynthesis; 1-deoxy-D-xylulose 5-phosphate biosynthesis; 1-deoxy-D-xylulose 5-phosphate from D-glyceraldehyde 3-phosphate and pyruvate: step 1/1. In terms of biological role, catalyzes the acyloin condensation reaction between C atoms 2 and 3 of pyruvate and glyceraldehyde 3-phosphate to yield 1-deoxy-D-xylulose-5-phosphate (DXP). This chain is 1-deoxy-D-xylulose-5-phosphate synthase, found in Paenarthrobacter aurescens (strain TC1).